A 369-amino-acid polypeptide reads, in one-letter code: Phosphoribosyl pyrophosphate synthase-associated protein 2 (369 aa).

An N-acetylmethionine modification is found at methionine 1. A phosphoserine mark is found at serine 219, serine 227, and serine 233.

This sequence belongs to the ribose-phosphate pyrophosphokinase family. In terms of assembly, binds to PRPS1 and PRPS2. Ubiquitous.

Functionally, seems to play a negative regulatory role in 5-phosphoribose 1-diphosphate synthesis. The sequence is that of Phosphoribosyl pyrophosphate synthase-associated protein 2 (Prpsap2) from Rattus norvegicus (Rat).